The following is a 1755-amino-acid chain: Transposon Ty1-DR5 Gag-Pol polyprotein (1755 aa).

3 stretches are compositionally biased toward polar residues: residues 1-10, 48-60, and 127-152; these read MESQQLSNYP, TKANSQQTTTPAS, and QSQFPQYPSSVGTPLSTPSPESGNTF. Disordered stretches follow at residues 1 to 93, 126 to 173, and 352 to 421; these read MESQ…MMTQ, PQSQ…RPPP, and GSRN…SKST. A compositionally biased stretch (low complexity) spans 153–165; the sequence is TDSSSADSDMTST. Positions 299-401 are RNA-binding; the sequence is NNGIHINNKV…NSKSKTARAH (103 aa). Low complexity predominate over residues 402 to 418; that stretch reads NVSTSNNSPSTDNDSIS. The active-site For protease activity; shared with dimeric partner is Asp461. The interval 583-640 is integrase-type zinc finger-like; it reads NVHTSESTRKYPYPFIHRMLAHANAQTIRYSLKNNTITYFNESDVDWSSAIDYQCPDC. Positions 660–835 constitute an Integrase catalytic domain; the sequence is NSYEPFQYLH…AGLDISTLLP (176 aa). Residues Asp671 and Asp736 each contribute to the Mg(2+) site. Disordered regions lie at residues 956–1087, 1092–1111, and 1130–1187; these read SKAV…ETEK, RSPSIDASPPENNSSHNIVP, and DLPL…DNET. Residues 960 to 969 show a composition bias toward low complexity; sequence SPTDSTPPST. Over residues 1005 to 1015 the composition is skewed to polar residues; it reads STPQISNIEST. Residues 1038–1053 are compositionally biased toward basic and acidic residues; that stretch reads ESSHASKSKDFRHSDS. Polar residues-rich tracts occupy residues 1054–1082 and 1101–1111; these read YSENETNHTNVPISSTGGTNNKTVPQISD and PENNSSHNIVP. The Bipartite nuclear localization signal motif lies at 1178-1212; it reads KKRSLEDNETEIKVSRDTWNTKNMRSLEPPRSKKR. The 139-residue stretch at 1338 to 1476 folds into the Reverse transcriptase Ty1/copia-type domain; the sequence is NNYYITQLDI…DILGLEIKYQ (139 aa). Asp1346, Asp1427, Asp1428, Asp1610, Glu1652, and Asp1685 together coordinate Mg(2+). The RNase H Ty1/copia-type domain occupies 1610–1752; sequence DASYGNQPYY…IKTFKLLTNK (143 aa).

In terms of assembly, the capsid protein forms a homotrimer, from which the VLPs are assembled. The protease is a homodimer, whose active site consists of two apposed aspartic acid residues. Initially, virus-like particles (VLPs) are composed of the structural unprocessed proteins Gag and Gag-Pol, and also contain the host initiator methionine tRNA (tRNA(i)-Met) which serves as a primer for minus-strand DNA synthesis, and a dimer of genomic Ty RNA. Processing of the polyproteins occurs within the particle and proceeds by an ordered pathway, called maturation. First, the protease (PR) is released by autocatalytic cleavage of the Gag-Pol polyprotein yielding capsid protein p45 and a Pol-p154 precursor protein. This cleavage is a prerequisite for subsequent processing of Pol-p154 at the remaining sites to release the mature structural and catalytic proteins. Maturation takes place prior to the RT reaction and is required to produce transposition-competent VLPs.

It localises to the cytoplasm. Its subcellular location is the nucleus. The enzyme catalyses DNA(n) + a 2'-deoxyribonucleoside 5'-triphosphate = DNA(n+1) + diphosphate. It carries out the reaction Endonucleolytic cleavage to 5'-phosphomonoester.. Its function is as follows. Capsid protein (CA) is the structural component of the virus-like particle (VLP), forming the shell that encapsulates the retrotransposons dimeric RNA genome. The particles are assembled from trimer-clustered units and there are holes in the capsid shells that allow for the diffusion of macromolecules. CA also has nucleocapsid-like chaperone activity, promoting primer tRNA(i)-Met annealing to the multipartite primer-binding site (PBS), dimerization of Ty1 RNA and initiation of reverse transcription. In terms of biological role, the aspartyl protease (PR) mediates the proteolytic cleavages of the Gag and Gag-Pol polyproteins after assembly of the VLP. Reverse transcriptase/ribonuclease H (RT) is a multifunctional enzyme that catalyzes the conversion of the retro-elements RNA genome into dsDNA within the VLP. The enzyme displays a DNA polymerase activity that can copy either DNA or RNA templates, and a ribonuclease H (RNase H) activity that cleaves the RNA strand of RNA-DNA heteroduplexes during plus-strand synthesis and hydrolyzes RNA primers. The conversion leads to a linear dsDNA copy of the retrotransposon that includes long terminal repeats (LTRs) at both ends. Functionally, integrase (IN) targets the VLP to the nucleus, where a subparticle preintegration complex (PIC) containing at least integrase and the newly synthesized dsDNA copy of the retrotransposon must transit the nuclear membrane. Once in the nucleus, integrase performs the integration of the dsDNA into the host genome. In Saccharomyces cerevisiae (strain ATCC 204508 / S288c) (Baker's yeast), this protein is Transposon Ty1-DR5 Gag-Pol polyprotein (TY1B-DR5).